Consider the following 246-residue polypeptide: Cell division protein ZapD (246 aa).

It belongs to the ZapD family. Interacts with FtsZ.

It localises to the cytoplasm. Cell division factor that enhances FtsZ-ring assembly. Directly interacts with FtsZ and promotes bundling of FtsZ protofilaments, with a reduction in FtsZ GTPase activity. The protein is Cell division protein ZapD of Vibrio atlanticus (strain LGP32) (Vibrio splendidus (strain Mel32)).